Reading from the N-terminus, the 435-residue chain is Putative F-box/FBD/LRR-repeat protein At5g56810 (435 aa).

Positions 14–62 (PDRISQLPNDLLFRILSLIPVSDAMSTSLLSKRWKSVWKMLPTLVYNEN) constitute an F-box domain. LRR repeat units lie at residues 64–95 (CSNI…TLEL), 146–173 (LKLQ…YLTC), 174–199 (VNFE…FLQR), 222–248 (KEQA…NIFD), 266–291 (SVRV…SLDL), and 316–341 (YDNF…KLNH). The 52-residue stretch at 353–404 (CSVSEPSSVPECLSFHLETFQWIGYAGTFEEIAAAVYVLKNARCLKNATISL) folds into the FBD domain.

This Arabidopsis thaliana (Mouse-ear cress) protein is Putative F-box/FBD/LRR-repeat protein At5g56810.